Reading from the N-terminus, the 82-residue chain is Small ribosomal subunit protein bS20 (82 aa).

A disordered region spans residues 1–29; sequence MPNIKSAKKDLRRSRAAAVRNRAQRSALR. The segment covering 16–29 has biased composition (low complexity); that stretch reads AAAVRNRAQRSALR.

This sequence belongs to the bacterial ribosomal protein bS20 family.

In terms of biological role, binds directly to 16S ribosomal RNA. This is Small ribosomal subunit protein bS20 from Gemmatimonas aurantiaca (strain DSM 14586 / JCM 11422 / NBRC 100505 / T-27).